We begin with the raw amino-acid sequence, 479 residues long: RAC-gamma serine/threonine-protein kinase (479 aa).

S2 carries the N-acetylserine modification. The PH domain occupies 5–107 (TIVKEGWVQK…WTEAIQAVAD (103 aa)). A disulfide bridge links C59 with C76. Residues 148–405 (FDYLKLLGKG…AKEIMRHSFF (258 aa)) form the Protein kinase domain. ATP contacts are provided by residues 154-162 (LGKGTFGKV) and K177. The active-site Proton acceptor is the D271. C293 and C307 are oxidised to a cystine. A glycan (O-linked (GlcNAc) threonine) is linked at T302. T305 carries the phosphothreonine; by PDPK1 modification. O-linked (GlcNAc) threonine glycosylation is present at T309. Residues 406–479 (SGVNWQDVYD…QFSYSASGRE (74 aa)) enclose the AGC-kinase C-terminal domain. The residue at position 447 (T447) is a Phosphothreonine. The disordered stretch occupies residues 458-479 (DCMDNERRPHFPQFSYSASGRE). S472 is modified (phosphoserine; by PKC/PRKCZ). S472 carries an O-linked (GlcNAc) serine; alternate glycan.

This sequence belongs to the protein kinase superfamily. AGC Ser/Thr protein kinase family. RAC subfamily. As to quaternary structure, interacts (via PH domain) with TCL1A; this enhances AKT3 phosphorylation and activation. Interacts with TRAF6. Interacts with KCTD20. Interacts with BTBD10. Phosphorylation on Thr-305 and Ser-472 is required for full activity. Phosphorylation of the activation loop at Thr-305 by PDPK1/PDK1 is a prerequisite for full activation. Phosphorylation at Ser-472 by mTORC2 in response to growth factors plays a key role in AKT1 activation by facilitating subsequent phosphorylation of the activation loop by PDPK1/PDK1. In terms of processing, ubiquitinated. When fully phosphorylated and translocated into the nucleus, undergoes 'Lys-48'-polyubiquitination catalyzed by TTC3, leading to its degradation by the proteasome. Post-translationally, O-GlcNAcylation at Thr-302 and Thr-309 inhibits activating phosphorylation at Thr-305 via disrupting the interaction between AKT and PDPK1/PDK1. As to expression, in adult tissues, it is highly expressed in brain, lung and kidney, but weakly in heart, testis and liver. In fetal tissues, it is highly expressed in heart, liver and brain and not at all in kidney.

The protein localises to the nucleus. It is found in the cytoplasm. The protein resides in the membrane. The enzyme catalyses L-seryl-[protein] + ATP = O-phospho-L-seryl-[protein] + ADP + H(+). It carries out the reaction L-threonyl-[protein] + ATP = O-phospho-L-threonyl-[protein] + ADP + H(+). Two specific sites, one in the kinase domain (Thr-305) and the other in the C-terminal regulatory region (Ser-472), need to be phosphorylated for its full activation. IGF-1 leads to the activation of AKT3, which may play a role in regulating cell survival. Its function is as follows. AKT3 is one of 3 closely related serine/threonine-protein kinases (AKT1, AKT2 and AKT3) called the AKT kinase, and which regulate many processes including metabolism, proliferation, cell survival, growth and angiogenesis. This is mediated through serine and/or threonine phosphorylation of a range of downstream substrates. Over 100 substrate candidates have been reported so far, but for most of them, no isoform specificity has been reported. AKT3 is the least studied AKT isoform. It plays an important role in brain development and is crucial for the viability of malignant glioma cells. AKT3 isoform may also be the key molecule in up-regulation and down-regulation of MMP13 via IL13. Required for the coordination of mitochondrial biogenesis with growth factor-induced increases in cellular energy demands. Down-regulation by RNA interference reduces the expression of the phosphorylated form of BAD, resulting in the induction of caspase-dependent apoptosis. In Homo sapiens (Human), this protein is RAC-gamma serine/threonine-protein kinase (AKT3).